Here is a 340-residue protein sequence, read N- to C-terminus: MSNIDKERAIAAALAQIEKSYGKGSVMKLGQRPNVDIEAISTGSLGLDIALGIGGVPKGRIIEIFGPESSGKTTLTLHLIAESQKKGGTCAFIDAEHALDPAYAKKLGVNIDELIISQPDTGEQALEIADTLIRSGGIDMIIIDSVAALVPKSEIEGEMGDAQMASQARLMSQALRKLTASINRTNCITVFINQIRMKIGVMFGSPETTTGGNALKFYASVRIDIRRIGSIKDKEEVIGSQTKVKVVKNKVSPPFKTADFDIMYGSGISKEGEIIDLGVKLEIIEKSGSWFSYNKIRIGQGRENVKQYLKEHPQISNEIEKIIREKSSAITNINLDQTEE.

66 to 73 (GPESSGKT) provides a ligand contact to ATP.

Belongs to the RecA family.

The protein resides in the cytoplasm. In terms of biological role, can catalyze the hydrolysis of ATP in the presence of single-stranded DNA, the ATP-dependent uptake of single-stranded DNA by duplex DNA, and the ATP-dependent hybridization of homologous single-stranded DNAs. It interacts with LexA causing its activation and leading to its autocatalytic cleavage. This is Protein RecA from Rickettsia prowazekii (strain Madrid E).